Here is a 342-residue protein sequence, read N- to C-terminus: Ribosomal RNA small subunit methyltransferase C (342 aa).

This sequence belongs to the methyltransferase superfamily. RsmC family. In terms of assembly, monomer.

It is found in the cytoplasm. It catalyses the reaction guanosine(1207) in 16S rRNA + S-adenosyl-L-methionine = N(2)-methylguanosine(1207) in 16S rRNA + S-adenosyl-L-homocysteine + H(+). Specifically methylates the guanine in position 1207 of 16S rRNA in the 30S particle. This Shewanella piezotolerans (strain WP3 / JCM 13877) protein is Ribosomal RNA small subunit methyltransferase C.